The following is a 146-amino-acid chain: Transcriptional regulator MraZ (146 aa).

SpoVT-AbrB domains are found at residues 7–54 (HVTN…GPEL) and 83–126 (GVYV…DPQA).

The protein belongs to the MraZ family. As to quaternary structure, forms oligomers.

It is found in the cytoplasm. Its subcellular location is the nucleoid. This is Transcriptional regulator MraZ from Rhizobium meliloti (strain 1021) (Ensifer meliloti).